Reading from the N-terminus, the 462-residue chain is Juvenile hormone epoxide hydrolase (462 aa).

Residues 4–24 form a helical membrane-spanning segment; sequence ILSSFVAGVAIGSGLVITYVL. D227 (nucleophile) is an active-site residue. Y372 acts as the Proton donor in catalysis. H428 serves as the catalytic Proton acceptor.

This sequence belongs to the peptidase S33 family.

It localises to the microsome membrane. The protein resides in the endoplasmic reticulum membrane. It carries out the reaction cis-stilbene oxide + H2O = (1R,2R)-hydrobenzoin. The enzyme catalyses 1-(4-methoxyphenyl)-N-methyl-N-[(3-methyloxetan-3-yl)methyl]methanamine + H2O = 2-{[(4-methoxybenzyl)(methyl)amino]methyl}-2-methylpropane-1,3-diol. Its function is as follows. Catalyzes juvenile hormone hydrolysis. The sequence is that of Juvenile hormone epoxide hydrolase from Manduca sexta (Tobacco hawkmoth).